The following is a 304-amino-acid chain: Nod factor export ATP-binding protein I (304 aa).

An ABC transporter domain is found at 6–236; that stretch reads IEFDKVKKSY…EIGCDVIEIF (231 aa). Position 38-45 (38-45) interacts with ATP; that stretch reads GPNGAGKT.

Belongs to the ABC transporter superfamily. Lipooligosaccharide exporter (TC 3.A.1.102) family. The complex is composed of two ATP-binding proteins (NodI) and two transmembrane proteins (NodJ).

It is found in the cell inner membrane. Functionally, part of the ABC transporter complex NodIJ involved in the export of the nodulation factors (Nod factors), the bacterial signal molecules that induce symbiosis and subsequent nodulation induction. Nod factors are LCO (lipo-chitin oligosaccharide), a modified beta-1,4-linked N-acetylglucosamine oligosaccharide. This subunit is responsible for energy coupling to the transport system. In Paraburkholderia xenovorans (strain LB400), this protein is Nod factor export ATP-binding protein I.